A 130-amino-acid polypeptide reads, in one-letter code: Ornithine decarboxylase antizyme (130 aa).

Residues 1 to 14 (SDVPVHHRTDHDRA) are compositionally biased toward basic and acidic residues. Positions 1-56 (SDVPVHHRTDHDRASLLTGSSRKSSVDSAGGSLFEASSRASSPSSSSSSECSDTES) are disordered. Residues 17 to 27 (LTGSSRKSSVD) are compositionally biased toward polar residues. The span at 32–51 (SLFEASSRASSPSSSSSSEC) shows a compositional bias: low complexity.

It belongs to the ODC antizyme family. Interacts with ODC1 and thereby sterically blocks ODC homodimerization.

Its function is as follows. Ornithine decarboxylase (ODC) antizyme protein that negatively regulates ODC activity and intracellular polyamine biosynthesis and uptake in response to increased intracellular polyamine levels. Binds to ODC monomers, inhibiting the assembly of the functional ODC homodimer, and targets the monomers for ubiquitin-independent proteolytic destruction by the 26S proteasome. This Drosophila virilis (Fruit fly) protein is Ornithine decarboxylase antizyme (Oda).